The chain runs to 435 residues: Glutamyl-tRNA reductase (435 aa).

Substrate is bound by residues 50–53, S110, 115–117, and Q121; these read TCNR and ETQ. Catalysis depends on C51, which acts as the Nucleophile. 189–194 is an NADP(+) binding site; sequence GAGEMS.

It belongs to the glutamyl-tRNA reductase family. In terms of assembly, homodimer.

It catalyses the reaction (S)-4-amino-5-oxopentanoate + tRNA(Glu) + NADP(+) = L-glutamyl-tRNA(Glu) + NADPH + H(+). It functions in the pathway porphyrin-containing compound metabolism; protoporphyrin-IX biosynthesis; 5-aminolevulinate from L-glutamyl-tRNA(Glu): step 1/2. In terms of biological role, catalyzes the NADPH-dependent reduction of glutamyl-tRNA(Glu) to glutamate 1-semialdehyde (GSA). The chain is Glutamyl-tRNA reductase from Campylobacter lari (strain RM2100 / D67 / ATCC BAA-1060).